A 1177-amino-acid chain; its full sequence is Lysylphosphatidylglycerol biosynthesis bifunctional protein LysX (1177 aa).

2 disordered regions span residues 1–40 (MRRA…AKFV) and 61–85 (VTLA…PRNR). The phosphatidylglycerol lysyltransferase stretch occupies residues 1 to 676 (MRRAGRSRQF…LLHHDGSAPD (676 aa)). Residues 65 to 85 (SPGSRSGSGPRSGPRLGPRNR) are compositionally biased toward low complexity. 6 consecutive transmembrane segments (helical) span residues 93–113 (VPAA…LGSV), 135–155 (FPDT…ALTA), 159–179 (IAWL…VADI), 189–209 (IFGE…LVLA), 227–247 (AVLV…VELF), and 281–301 (VFLN…ATIV). Residues 673 to 693 (SAPDVSGLRPERTDAEEARSR) form a disordered region. The tract at residues 677 to 1177 (VSGLRPERTD…TLPFPLAKPH (501 aa)) is lysine--tRNA ligase. A compositionally biased stretch (basic and acidic residues) spans 681 to 693 (RPERTDAEEARSR). A DNA-binding region (OB) is located at residues 738–816 (ITVAGRILRI…SLIVTDWRMI (79 aa)). 2 residues coordinate Mg(2+): Asp1089 and Glu1096.

It in the N-terminal section; belongs to the LPG synthetase family. The protein in the C-terminal section; belongs to the class-II aminoacyl-tRNA synthetase family. Mg(2+) serves as cofactor.

It localises to the cell membrane. It catalyses the reaction tRNA(Lys) + L-lysine + ATP = L-lysyl-tRNA(Lys) + AMP + diphosphate. The catalysed reaction is L-lysyl-tRNA(Lys) + a 1,2-diacyl-sn-glycero-3-phospho-(1'-sn-glycerol) = a 1,2-diacyl-sn-glycero-3-phospho-1'-(3'-O-L-lysyl)-sn-glycerol + tRNA(Lys). Functionally, catalyzes the production of L-lysyl-tRNA(Lys)transfer and the transfer of a lysyl group from L-lysyl-tRNA(Lys) to membrane-bound phosphatidylglycerol (PG), which produces lysylphosphatidylglycerol (LPG), one of the components of the bacterial membrane with a positive net charge. LPG synthesis contributes to the resistance to cationic antimicrobial peptides (CAMPs) and likely protects M.tuberculosis against the CAMPs produced by competiting microorganisms (bacteriocins). In fact, the modification of anionic phosphatidylglycerol with positively charged L-lysine results in repulsion of the peptides. This is Lysylphosphatidylglycerol biosynthesis bifunctional protein LysX (lysX) from Mycolicibacterium paratuberculosis (strain ATCC BAA-968 / K-10) (Mycobacterium paratuberculosis).